A 687-amino-acid polypeptide reads, in one-letter code: Adhesion G-protein coupled receptor G1 (687 aa).

The first 25 residues, Met1–Gly25, serve as a signal peptide directing secretion. Arg26 to Arg33 lines the heparin pocket. Topologically, residues Arg26–Tyr402 are extracellular. 2 disulfides stabilise this stretch: Cys35/Cys91 and Cys121/Cys177. Residues Asn39, Asn148, Asn156, and Asn171 are each glycosylated (N-linked (GlcNAc...) asparagine). Residue Leu190–Pro200 coordinates heparin. Positions Asp224–Val395 constitute a GAIN-B domain. 4 N-linked (GlcNAc...) asparagine glycosylation sites follow: Asn234, Asn303, Asn324, and Asn341. 2 disulfide bridges follow: Cys346/Cys377 and Cys366/Cys379. Positions Cys346–Val395 are GPS. Residues Tyr384–Ala397 are stachel. The chain crosses the membrane as a helical span at residues Leu403–Ala423. Over Ala424–Asn442 the chain is Cytoplasmic. The chain crosses the membrane as a helical span at residues Leu443 to Thr463. Residues Gly464–Arg470 lie on the Extracellular side of the membrane. Residues Ala471 to Gly491 form a helical membrane-spanning segment. At Tyr492 to Lys512 the chain is on the cytoplasmic side. Residues Leu513–Val533 form a helical membrane-spanning segment. At Asp534–Gly570 the chain is on the extracellular side. A helical transmembrane segment spans residues Leu571 to Leu591. Topologically, residues Arg592–Val603 are cytoplasmic. Residues Leu604–Phe624 traverse the membrane as a helical segment. Over Ala625–Gln630 the chain is Extracellular. The helical transmembrane segment at Leu631–Trp651 threads the bilayer. Residues Tyr652–Ile687 lie on the Cytoplasmic side of the membrane. Positions Ser664–Ile687 are disordered. The span at Leu666–Ile687 shows a compositional bias: polar residues.

The protein belongs to the G-protein coupled receptor 2 family. LN-TM7 subfamily. In terms of assembly, heterodimer of 2 chains generated by proteolytic processing; the large extracellular N-terminal fragment (ADGRG1 NT) and the membrane-bound C-terminal fragment (ADGRG1-CT) predominantly remain associated and non-covalently linked. ADGRG1 NT self-associates in a trans-trans manner; the homophilic interaction enhances receptor signaling. Interacts with TGM2. Interacts with heparin; leading to the reduction of ADGRG1 shedding. Interacts with COL3A1. Part of a GPCR-tetraspanin complex at least consisting of ADGRG1, CD81, eventually CD9, and GNA11 in which CD81 is enhancing the association of ADGRG1 with GNA11. Autoproteolytically cleaved into 2 fragments; the large extracellular N-terminal fragment (ADGRG1 NT) and the membrane-bound C-terminal fragment (ADGRG1 CT) predominantly remain associated and non-covalently linked. Shedding to yield the secreted ADGRG1 N-terminal fragment seems to involve metalloprotease(s). Post-translationally, ubiquitinated. Undergoes polyubiquitination upon activation.

The protein localises to the cell membrane. It localises to the secreted. It is found in the membrane raft. Its activity is regulated as follows. Forms a heterodimer of 2 chains generated by proteolytic processing that remain associated through non-covalent interactions mediated by the GAIN-B domain. In the inactivated receptor, the Stachel sequence (also named stalk) is embedded in the GAIN-B domain, where it adopts a beta-strand conformation. On activation, the Stachel moves into the 7 transmembrane region and adopts a twisted hook-shaped configuration that forms contacts within the receptor, leading to coupling of a G-alpha protein, which activates signaling. The cleaved GAIN-B and N-terminal domains can then dissociate from the rest of the receptor. In terms of biological role, adhesion G-protein coupled receptor (aGPCR) for steroid hormone 17alpha-hydroxypregnenolone (17-OH), which is involved in cell adhesion and cell-cell interactions. Ligand binding causes a conformation change that triggers signaling via guanine nucleotide-binding proteins (G proteins) and modulates the activity of downstream effectors, such as RhoA pathway. ADGRG1 is coupled to G(12) and/or G(13) G proteins (GNA12 and GNA13, respectively) and mediates the activation Rho small GTPases. Acts as a potent suppressor of ferroptosis: binding to 17-OH-binding initiates signaling that down-regulates CD36 and alleviates ferroptosis-induced liver injury. Ligand-binding also induces cell adhesion activity via association with proteins such as collagen III/COL3A1 and TGM2. Mediates cell matrix adhesion in developing neurons and hematopoietic stem cells. Involved in cortical development, specifically in maintenance of the pial basement membrane integrity and in cortical lamination: association with COL3A1 in the developing brain inhibits neuronal migration via activation of the RhoA pathway. Together with TGM2, acts as a regulator of myelination and myelin repair in oligodendrocyte precursor cells. Acts as a hemostatic sensor of shear force: G protein-coupled receptor signaling is activated in response to shear force in platelets, promoting G(13) G protein signaling, and platelet shape change and aggregation in a COL3A1-dependent manner. Acts as an inhibitor of VEGFA production thereby inhibiting angiogenesis through a signaling pathway mediated by PRKCA. Plays a role in the maintenance of hematopoietic stem cells in bone marrow niche. Plays an essential role in testis development. The polypeptide is Adhesion G-protein coupled receptor G1 (ADGRG1) (Macaca mulatta (Rhesus macaque)).